Reading from the N-terminus, the 360-residue chain is MDNLIKQLQMSVSSENVDRNFIEKCIEMNPCRRMLHEVLLERKDILRSRMNLVALYDTDEQSSEIEEILAQFENPTFPLEEVNTEKDEEWQPLERKYLDGINRIKEDTIMKQIQLDKDMEKALTNSEEVLRNHRDFRPIDEKDFSNIRQSISKRFEHSKNNIRGEAATKILVLRREIEQQGRKRRNFDKNTTDILQNWFHDHRQNPYPSDQEKAELAKQCNIKISQVNNWFGNQRIRTKQQALRMQEDERERAASMANEAQAIQNSLNSSTVASSSNMSTSGLINIPLVNPTMQSMVIPAVQPGLLGNPNAFLHQPHYFTAGGQMSLNDNGNGQQFFTDYETFGLAQSDTESFNQMGYLG.

Residues 1-82 are PBC-A; it reads MDNLIKQLQM…ENPTFPLEEV (82 aa). Positions 1–179 constitute a PBC domain; that stretch reads MDNLIKQLQM…ILVLRREIEQ (179 aa). Residues 85–179 are PBC-B; that stretch reads EKDEEWQPLE…ILVLRREIEQ (95 aa). A DNA-binding region (homeobox) is located at residues 180–242; it reads QGRKRRNFDK…NQRIRTKQQA (63 aa).

The protein belongs to the TALE/PBX homeobox family. Forms a heterodimer with homeobox unc-62. Interacts with pqm-1.

Its subcellular location is the nucleus. In terms of biological role, probable transcription regulator which binds to DNA, repressing genes involved in longevity and stress, while activating genes involved in reproduction, such as the vitellogenins. Associates with homeobox unc-62 to regulate gene expression, including repression of genes involved in innate immunity. Required for intestinal expression of vitellogenin genes. Negatively modulates longevity, probably independently of effects on vitellogenesis. Involved in lipid homeostasis, contributing to the reallocation of intestinal lipids to the germline and to the formation of the cuticle. Associates with transcriptional regulator pqm-1 at the daf-16 associated element within the promoters of stress-responsive genes to regulate expression. This is Homeobox protein ceh-60 from Caenorhabditis elegans.